The following is a 219-amino-acid chain: 2-C-methyl-D-erythritol 4-phosphate cytidylyltransferase (219 aa).

This sequence belongs to the IspD/TarI cytidylyltransferase family. IspD subfamily.

The catalysed reaction is 2-C-methyl-D-erythritol 4-phosphate + CTP + H(+) = 4-CDP-2-C-methyl-D-erythritol + diphosphate. It functions in the pathway isoprenoid biosynthesis; isopentenyl diphosphate biosynthesis via DXP pathway; isopentenyl diphosphate from 1-deoxy-D-xylulose 5-phosphate: step 2/6. Catalyzes the formation of 4-diphosphocytidyl-2-C-methyl-D-erythritol from CTP and 2-C-methyl-D-erythritol 4-phosphate (MEP). The polypeptide is 2-C-methyl-D-erythritol 4-phosphate cytidylyltransferase (Bacteroides fragilis (strain ATCC 25285 / DSM 2151 / CCUG 4856 / JCM 11019 / LMG 10263 / NCTC 9343 / Onslow / VPI 2553 / EN-2)).